The primary structure comprises 331 residues: Glutamyl-Q tRNA(Asp) synthetase (331 aa).

Over residues Met-1–Thr-30 the composition is skewed to polar residues. Residues Met-1–Phe-36 are disordered. L-glutamate-binding positions include Arg-35–Ser-39 and Glu-71. Residues Pro-38–Ser-48 carry the 'HIGH' region motif. Zn(2+)-binding residues include Cys-127, Cys-129, Tyr-141, and Cys-145. L-glutamate contacts are provided by Tyr-198 and Arg-216. Residues Lys-254 to Gln-258 carry the 'KMSKS' region motif. ATP is bound at residue Lys-257.

The protein belongs to the class-I aminoacyl-tRNA synthetase family. GluQ subfamily. It depends on Zn(2+) as a cofactor.

Its function is as follows. Catalyzes the tRNA-independent activation of glutamate in presence of ATP and the subsequent transfer of glutamate onto a tRNA(Asp). Glutamate is transferred on the 2-amino-5-(4,5-dihydroxy-2-cyclopenten-1-yl) moiety of the queuosine in the wobble position of the QUC anticodon. This Yersinia pseudotuberculosis serotype I (strain IP32953) protein is Glutamyl-Q tRNA(Asp) synthetase.